The sequence spans 361 residues: Chorismate synthase (361 aa).

NADP(+) is bound by residues Arg-48 and Arg-54. FMN-binding positions include 125-127 (RSS), 238-239 (NA), Gly-278, 293-297 (KPTSS), and Arg-319.

This sequence belongs to the chorismate synthase family. As to quaternary structure, homotetramer. FMNH2 is required as a cofactor.

The enzyme catalyses 5-O-(1-carboxyvinyl)-3-phosphoshikimate = chorismate + phosphate. It participates in metabolic intermediate biosynthesis; chorismate biosynthesis; chorismate from D-erythrose 4-phosphate and phosphoenolpyruvate: step 7/7. Catalyzes the anti-1,4-elimination of the C-3 phosphate and the C-6 proR hydrogen from 5-enolpyruvylshikimate-3-phosphate (EPSP) to yield chorismate, which is the branch point compound that serves as the starting substrate for the three terminal pathways of aromatic amino acid biosynthesis. This reaction introduces a second double bond into the aromatic ring system. This is Chorismate synthase from Escherichia coli O1:K1 / APEC.